The following is a 94-amino-acid chain: Large ribosomal subunit protein bL31 (94 aa).

Residues 64 to 94 (KYGMANPDEDSTKNTKSSKKETSEDSSSKGS) are disordered. Residues 73–94 (DSTKNTKSSKKETSEDSSSKGS) show a composition bias toward basic and acidic residues.

Belongs to the bacterial ribosomal protein bL31 family. Type A subfamily. In terms of assembly, part of the 50S ribosomal subunit.

Functionally, binds the 23S rRNA. In Prochlorococcus marinus (strain SARG / CCMP1375 / SS120), this protein is Large ribosomal subunit protein bL31.